The sequence spans 157 residues: Transcriptional repressor NrdR (157 aa).

The segment at 3-34 is a zinc-finger region; it reads CPFCNTVDTKVIDSRLVSEGSQIKRRRQCAIC. Residues 49 to 139 form the ATP-cone domain; that stretch reads PRVIKNDDLL…VYRSFEDVRE (91 aa).

This sequence belongs to the NrdR family. Requires Zn(2+) as cofactor.

Its function is as follows. Negatively regulates transcription of bacterial ribonucleotide reductase nrd genes and operons by binding to NrdR-boxes. In Hamiltonella defensa subsp. Acyrthosiphon pisum (strain 5AT), this protein is Transcriptional repressor NrdR.